The following is a 411-amino-acid chain: Glutamate dehydrogenase 3, mitochondrial (411 aa).

Residues 1 to 18 (MNALAATSRNFRQAARLL) constitute a mitochondrion transit peptide. K102 is an active-site residue.

This sequence belongs to the Glu/Leu/Phe/Val dehydrogenases family. As to expression, barely expressed in leaves, spikelets and roots. Glumes and stamens specific accumulation.

The protein resides in the mitochondrion. It carries out the reaction L-glutamate + NAD(+) + H2O = 2-oxoglutarate + NH4(+) + NADH + H(+). The enzyme catalyses L-glutamate + NADP(+) + H2O = 2-oxoglutarate + NH4(+) + NADPH + H(+). This is Glutamate dehydrogenase 3, mitochondrial (GDH3) from Oryza sativa subsp. japonica (Rice).